Reading from the N-terminus, the 120-residue chain is UPF0231 protein YacL (120 aa).

Belongs to the UPF0231 family.

The chain is UPF0231 protein YacL from Salmonella paratyphi A (strain ATCC 9150 / SARB42).